The sequence spans 204 residues: FMN-dependent NADH:quinone oxidoreductase (204 aa).

Residues Ser10, 15–17, and 139–142 contribute to the FMN site; these read SLS and TSGG.

It belongs to the azoreductase type 1 family. Homodimer. The cofactor is FMN.

The enzyme catalyses 2 a quinone + NADH + H(+) = 2 a 1,4-benzosemiquinone + NAD(+). It carries out the reaction N,N-dimethyl-1,4-phenylenediamine + anthranilate + 2 NAD(+) = 2-(4-dimethylaminophenyl)diazenylbenzoate + 2 NADH + 2 H(+). In terms of biological role, quinone reductase that provides resistance to thiol-specific stress caused by electrophilic quinones. Functionally, also exhibits azoreductase activity. Catalyzes the reductive cleavage of the azo bond in aromatic azo compounds to the corresponding amines. This Rhizobium leguminosarum bv. trifolii (strain WSM2304) protein is FMN-dependent NADH:quinone oxidoreductase.